A 454-amino-acid polypeptide reads, in one-letter code: Bifunctional protein GlmU (454 aa).

A pyrophosphorylase region spans residues 1-226 (MALNVVILAA…AVEVEGANNR (226 aa)). Residues 8–11 (LAAG), lysine 22, glutamine 73, 78–79 (GT), 100–102 (YGD), glycine 137, glutamate 151, asparagine 166, and asparagine 224 each bind UDP-N-acetyl-alpha-D-glucosamine. Aspartate 102 is a Mg(2+) binding site. Asparagine 224 is a binding site for Mg(2+). Residues 227–247 (VQLAQLERAYQARAAEKLMLE) form a linker region. Residues 248-454 (GANLRDPARI…GWARPVKKAK (207 aa)) form an N-acetyltransferase region. UDP-N-acetyl-alpha-D-glucosamine is bound by residues arginine 330 and lysine 348. Histidine 360 functions as the Proton acceptor in the catalytic mechanism. Tyrosine 363 and asparagine 374 together coordinate UDP-N-acetyl-alpha-D-glucosamine. Acetyl-CoA contacts are provided by residues alanine 377, 383-384 (NY), serine 402, alanine 420, and arginine 437.

The protein in the N-terminal section; belongs to the N-acetylglucosamine-1-phosphate uridyltransferase family. This sequence in the C-terminal section; belongs to the transferase hexapeptide repeat family. In terms of assembly, homotrimer. Requires Mg(2+) as cofactor.

Its subcellular location is the cytoplasm. It carries out the reaction alpha-D-glucosamine 1-phosphate + acetyl-CoA = N-acetyl-alpha-D-glucosamine 1-phosphate + CoA + H(+). The catalysed reaction is N-acetyl-alpha-D-glucosamine 1-phosphate + UTP + H(+) = UDP-N-acetyl-alpha-D-glucosamine + diphosphate. The protein operates within nucleotide-sugar biosynthesis; UDP-N-acetyl-alpha-D-glucosamine biosynthesis; N-acetyl-alpha-D-glucosamine 1-phosphate from alpha-D-glucosamine 6-phosphate (route II): step 2/2. It functions in the pathway nucleotide-sugar biosynthesis; UDP-N-acetyl-alpha-D-glucosamine biosynthesis; UDP-N-acetyl-alpha-D-glucosamine from N-acetyl-alpha-D-glucosamine 1-phosphate: step 1/1. It participates in bacterial outer membrane biogenesis; LPS lipid A biosynthesis. Its function is as follows. Catalyzes the last two sequential reactions in the de novo biosynthetic pathway for UDP-N-acetylglucosamine (UDP-GlcNAc). The C-terminal domain catalyzes the transfer of acetyl group from acetyl coenzyme A to glucosamine-1-phosphate (GlcN-1-P) to produce N-acetylglucosamine-1-phosphate (GlcNAc-1-P), which is converted into UDP-GlcNAc by the transfer of uridine 5-monophosphate (from uridine 5-triphosphate), a reaction catalyzed by the N-terminal domain. In Shewanella piezotolerans (strain WP3 / JCM 13877), this protein is Bifunctional protein GlmU.